A 219-amino-acid chain; its full sequence is UPF0502 protein Gura_0277 (219 aa).

Belongs to the UPF0502 family.

This chain is UPF0502 protein Gura_0277, found in Geotalea uraniireducens (strain Rf4) (Geobacter uraniireducens).